The following is a 287-amino-acid chain: 4-diphosphocytidyl-2-C-methyl-D-erythritol kinase (287 aa).

Residue lysine 10 is part of the active site. An ATP-binding site is contributed by 92–102; sequence PLAAGLAGGSA. The active site involves aspartate 134.

The protein belongs to the GHMP kinase family. IspE subfamily.

The enzyme catalyses 4-CDP-2-C-methyl-D-erythritol + ATP = 4-CDP-2-C-methyl-D-erythritol 2-phosphate + ADP + H(+). It functions in the pathway isoprenoid biosynthesis; isopentenyl diphosphate biosynthesis via DXP pathway; isopentenyl diphosphate from 1-deoxy-D-xylulose 5-phosphate: step 3/6. Catalyzes the phosphorylation of the position 2 hydroxy group of 4-diphosphocytidyl-2C-methyl-D-erythritol. This chain is 4-diphosphocytidyl-2-C-methyl-D-erythritol kinase, found in Caldanaerobacter subterraneus subsp. tengcongensis (strain DSM 15242 / JCM 11007 / NBRC 100824 / MB4) (Thermoanaerobacter tengcongensis).